The following is a 334-amino-acid chain: Phosphate acyltransferase (334 aa).

It belongs to the PlsX family. Homodimer. Probably interacts with PlsY.

It localises to the cytoplasm. The catalysed reaction is a fatty acyl-[ACP] + phosphate = an acyl phosphate + holo-[ACP]. It functions in the pathway lipid metabolism; phospholipid metabolism. In terms of biological role, catalyzes the reversible formation of acyl-phosphate (acyl-PO(4)) from acyl-[acyl-carrier-protein] (acyl-ACP). This enzyme utilizes acyl-ACP as fatty acyl donor, but not acyl-CoA. This is Phosphate acyltransferase from Clostridium tetani (strain Massachusetts / E88).